We begin with the raw amino-acid sequence, 691 residues long: Zinc finger protein 770 (691 aa).

Lys-11 is covalently cross-linked (Glycyl lysine isopeptide (Lys-Gly) (interchain with G-Cter in SUMO2)). 3 C2H2-type zinc fingers span residues 27-49, 55-77, and 81-103; these read YVCN…YLIH, FECD…QLTH, and FKCS…QQLH. Residues Lys-112, Lys-121, and Lys-146 each participate in a glycyl lysine isopeptide (Lys-Gly) (interchain with G-Cter in SUMO2) cross-link. 3 C2H2-type zinc fingers span residues 160-182, 188-210, and 216-238; these read HACT…VLIH, FKCV…QLTH, and FQCC…KQIH. The tract at residues 258–277 is disordered; sequence PLPNKLNANQGGFENGEIGE. Residue Lys-262 forms a Glycyl lysine isopeptide (Lys-Gly) (interchain with G-Cter in SUMO2) linkage. The C2H2-type 7; degenerate zinc-finger motif lies at 294-318; sequence FQCPKCEKCFESEQILNEHSCFAAR. Residues Lys-420 and Lys-437 each participate in a glycyl lysine isopeptide (Lys-Gly) (interchain with G-Cter in SUMO2) cross-link. C2H2-type zinc fingers lie at residues 475 to 497, 503 to 525, 625 to 647, and 653 to 675; these read CPCD…YLIH, FGCN…EQTH, YRCS…YLIH, and FECS…QLTH. Lys-683 is covalently cross-linked (Glycyl lysine isopeptide (Lys-Gly) (interchain with G-Cter in SUMO2)).

The protein belongs to the krueppel C2H2-type zinc-finger protein family.

The protein localises to the nucleus. Functionally, may be involved in transcriptional regulation. The chain is Zinc finger protein 770 (ZNF770) from Homo sapiens (Human).